Reading from the N-terminus, the 452-residue chain is Na(+)/H(+) antiporter NhaA (452 aa).

The next 11 helical transmembrane spans lie at 23 to 43, 71 to 91, 108 to 128, 136 to 156, 165 to 185, 189 to 209, 216 to 236, 316 to 336, 349 to 369, 385 to 405, and 418 to 438; these read MMLF…LSTI, LLQF…GLEI, LPIV…LLVV, GAAI…AVLG, VFLT…IALF, HINI…YLMG, LGLY…SGIH, IVGY…TLGG, VFLG…YGFV, LMAV…IATL, and EAKL…IVTL.

This sequence belongs to the NhaA Na(+)/H(+) (TC 2.A.33) antiporter family.

It is found in the cell inner membrane. The catalysed reaction is Na(+)(in) + 2 H(+)(out) = Na(+)(out) + 2 H(+)(in). Na(+)/H(+) antiporter that extrudes sodium in exchange for external protons. The polypeptide is Na(+)/H(+) antiporter NhaA (Porphyromonas gingivalis (strain ATCC 33277 / DSM 20709 / CIP 103683 / JCM 12257 / NCTC 11834 / 2561)).